The chain runs to 59 residues: UPF0181 protein YoaH (59 aa).

The protein belongs to the UPF0181 family.

The protein is UPF0181 protein YoaH of Shigella sonnei (strain Ss046).